A 195-amino-acid polypeptide reads, in one-letter code: PRELI domain containing protein 3B (195 aa).

The PRELI/MSF1 domain maps to 1–172 (MKIWTSEHVF…VIHKLNAEIE (172 aa)). Phosphoserine occurs at positions 46 and 51.

It belongs to the slowmo family.

In Mus musculus (Mouse), this protein is PRELI domain containing protein 3B (Prelid3b).